Here is a 485-residue protein sequence, read N- to C-terminus: Ataxin-10 (485 aa).

It belongs to the ataxin-10 family.

The protein localises to the cytoplasm. It localises to the perinuclear region. It is found in the midbody. Its function is as follows. May play a role in the regulation of cytokinesis. May play a role in signaling by stimulating protein glycosylation. Induces neuritogenesis by activating the Ras-MAP kinase pathway and is necessary for the survival of cerebellar neurons. Does not appear to play a major role in ciliogenesis. The sequence is that of Ataxin-10 (atxn10) from Xenopus tropicalis (Western clawed frog).